Reading from the N-terminus, the 414-residue chain is Ferredoxin--NAD(P)(+) reductase fdr (414 aa).

7-38 (DVVIVGAGHGGAQTAIALRQNGFAGTIAIIGA) contributes to the FAD binding site. NAD(+) is bound at residue 149 to 177 (KVVIIGGGYIGLEAAAVMAKFGKNVTLIE).

It belongs to the FAD-dependent oxidoreductase family. As to quaternary structure, monomer. Carbazole 1,9a-dioxygenase complex consists of a terminal oxygenase component CarAa, a ferredoxin reductase component fdr and a ferredoxin component CarAc. FAD serves as cofactor.

It catalyses the reaction 2 reduced [2Fe-2S]-[ferredoxin] + NAD(+) + H(+) = 2 oxidized [2Fe-2S]-[ferredoxin] + NADH. The enzyme catalyses 2 reduced [2Fe-2S]-[ferredoxin] + NADP(+) + H(+) = 2 oxidized [2Fe-2S]-[ferredoxin] + NADPH. Its function is as follows. Part of the multicomponent carbazole 1,9a-dioxygenase (CARDO), that converts carbazole (CAR) into 2-aminobiphenyl-2,3-diol. The polypeptide is Ferredoxin--NAD(P)(+) reductase fdr (fdr) (Sphingomonas sp).